Here is a 338-residue protein sequence, read N- to C-terminus: D-alanine--D-alanine ligase (338 aa).

The ATP-grasp domain maps to K120–K324. P150 to T205 lines the ATP pocket. Mg(2+) is bound by residues D277, E291, and N293.

Belongs to the D-alanine--D-alanine ligase family. Requires Mg(2+) as cofactor. It depends on Mn(2+) as a cofactor.

It localises to the cytoplasm. It catalyses the reaction 2 D-alanine + ATP = D-alanyl-D-alanine + ADP + phosphate + H(+). It participates in cell wall biogenesis; peptidoglycan biosynthesis. Cell wall formation. The polypeptide is D-alanine--D-alanine ligase (Polaromonas sp. (strain JS666 / ATCC BAA-500)).